The sequence spans 133 residues: ATP synthase epsilon chain, chloroplastic (133 aa).

The protein belongs to the ATPase epsilon chain family. In terms of assembly, F-type ATPases have 2 components, CF(1) - the catalytic core - and CF(0) - the membrane proton channel. CF(1) has five subunits: alpha(3), beta(3), gamma(1), delta(1), epsilon(1). CF(0) has three main subunits: a, b and c.

It is found in the plastid. The protein localises to the chloroplast thylakoid membrane. Produces ATP from ADP in the presence of a proton gradient across the membrane. The chain is ATP synthase epsilon chain, chloroplastic from Cyanidium caldarium (Red alga).